Here is a 118-residue protein sequence, read N- to C-terminus: Peptidyl-prolyl cis-trans isomerase Pin1 (118 aa).

Disordered regions lie at residues 1 to 37 (MSSE…ATTR) and 61 to 84 (LASR…GRGQ). The region spanning 3–118 (SEKVRASHIL…SGVHIIKRTG (116 aa)) is the PpiC domain. Residues 12–22 (LIKHQGSRRKS) show a composition bias toward basic residues.

It belongs to the PpiC/parvulin rotamase family. In terms of processing, the N-terminus is blocked. Expressed in roots, stems, leaves, flowers and seedlings.

The protein resides in the cytoplasm. It localises to the nucleus. The catalysed reaction is [protein]-peptidylproline (omega=180) = [protein]-peptidylproline (omega=0). Inhibited in vitro by juglone. Functionally, prolyl cis/trans isomerase with specificity for phospho-Ser-Pro bonds. The sequence is that of Peptidyl-prolyl cis-trans isomerase Pin1 (PARV12.8) from Digitalis lanata (Grecian foxglove).